A 183-amino-acid polypeptide reads, in one-letter code: GMP synthase [glutamine-hydrolyzing] subunit A (183 aa).

Residues 3–183 form the Glutamine amidotransferase type-1 domain; sequence HILVVDNHGQ…VFENFVAICE (181 aa). Cys-74 serves as the catalytic Nucleophile. Residues His-162 and Glu-164 contribute to the active site.

In terms of assembly, heterodimer composed of a glutamine amidotransferase subunit (A) and a GMP-binding subunit (B).

The enzyme catalyses XMP + L-glutamine + ATP + H2O = GMP + L-glutamate + AMP + diphosphate + 2 H(+). Its pathway is purine metabolism; GMP biosynthesis; GMP from XMP (L-Gln route): step 1/1. Functionally, catalyzes the synthesis of GMP from XMP. In Halobacterium salinarum (strain ATCC 700922 / JCM 11081 / NRC-1) (Halobacterium halobium), this protein is GMP synthase [glutamine-hydrolyzing] subunit A.